The primary structure comprises 894 residues: Glutamate receptor 3 (894 aa).

Residues 1–28 form the signal peptide; the sequence is MARQKKMGQNVLRAVFFLVLGLLGHSHG. Residues 29–552 are Extracellular-facing; the sequence is GFPNTISIGG…GVFSFLDPLA (524 aa). 5 N-linked (GlcNAc...) asparagine glycosylation sites follow: N63, N266, N380, N415, and N422. C91 and C340 are disulfide-bonded. Residues P508, T510, and R515 each contribute to the L-glutamate site. The chain crosses the membrane as a helical span at residues 553–573; the sequence is YEIWMCIVFASIGVSVVLFLV. The Cytoplasmic segment spans residues 574–602; sequence SRFSPYEWHLEDNNEEPRDPQSPPDPPNE. The helical; Pore-forming intramembrane region spans 603–618; that stretch reads FGIFNSLWFSLGAFMQ. Residues 619 to 621 lie within the membrane without spanning it; sequence QGC. The S-palmitoyl cysteine moiety is linked to residue C621. The Cytoplasmic segment spans residues 622–627; that stretch reads DISPRS. Residues 628–648 traverse the membrane as a helical segment; that stretch reads LSGRIVGGVWWFFTLIIISSY. The Extracellular segment spans residues 649 to 823; it reads TANLAAFLTV…DKTSALSLSN (175 aa). Residues S686, T687, and E737 each coordinate L-glutamate. C750 and C805 are disulfide-bonded. A helical transmembrane segment spans residues 824 to 844; that stretch reads VAGVFYILVGGLGLAMMVALI. Residues 845–894 are Cytoplasmic-facing; that stretch reads EFCYKSRAESKRMKLTKNTQNFKPAPATNTQNYATYREGYNVYGTESVKI. C847 carries the S-palmitoyl cysteine lipid modification. Phosphotyrosine occurs at positions 877 and 887.

Belongs to the glutamate-gated ion channel (TC 1.A.10.1) family. GRIA3 subfamily. Homotetramer or heterotetramer of pore-forming glutamate receptor subunits. Tetramers may be formed by the dimerization of dimers. Interacts with PICK1, GRIP1 and GRIP2. Found in a complex with GRIA1, GRIA2, GRIA4, CNIH2, CNIH3, CACNG2, CACNG3, CACNG4, CACNG5, CACNG7 and CACNG8. Interacts with CACNG5. Found in a complex with GRIA1, GRIA2, GRIA4, DLG4, CACNG8 and CNIH2.

The protein resides in the cell membrane. It is found in the postsynaptic cell membrane. Its subcellular location is the postsynaptic density membrane. The enzyme catalyses Ca(2+)(in) = Ca(2+)(out). Its function is as follows. Ionotropic glutamate receptor that functions as a ligand-gated cation channel, gated by L-glutamate and glutamatergic agonists such as alpha-amino-3-hydroxy-5-methyl-4-isoxazolepropionic acid (AMPA), quisqualic acid, and kainic acid. L-glutamate acts as an excitatory neurotransmitter at many synapses in the central nervous system and plays an important role in fast excitatory synaptic transmission by inducing long-term potentiation. Binding of the excitatory neurotransmitter L-glutamate induces a conformation change, leading to the opening of the cation channel, and thereby converts the chemical signal to an electrical impulse upon entry of calcium. The receptor then desensitizes rapidly and enters a transient inactive state, characterized by the presence of bound agonist. In the presence of CACNG8, shows resensitization which is characterized by a delayed accumulation of current flux upon continued application of glutamate. The chain is Glutamate receptor 3 from Macaca fascicularis (Crab-eating macaque).